The primary structure comprises 164 residues: Galectin-3 (164 aa).

The region spanning 9–154 is the Galectin domain; that stretch reads STVDLSEPLK…FSDVLGVTVL (146 aa). Residues histidine 60, arginine 64, asparagine 73, and glutamate 84 each coordinate a carbohydrate.

Homotetramer. Oligomerization is required for carbohydrate binding.

It is found in the secreted. The protein localises to the extracellular space. It localises to the extracellular matrix. The protein resides in the cell wall. In terms of biological role, binds lactose. May play a role in fruiting body formation. This is Galectin-3 (Cgl3) from Coprinopsis cinerea (strain Okayama-7 / 130 / ATCC MYA-4618 / FGSC 9003) (Inky cap fungus).